A 289-amino-acid chain; its full sequence is MSWLEKLLDKKNIINTRKASIPEGVWTKCPSCDQVLYRIALKENLEVCPKCQHHLRMSARHRLDGFLDKGERIELASEYEPKDLLNFKDKKRYKERLALSQKSTGEKDALVVMKGELLGLPIVACAFEFSFMAGSMGSVVGARFVDAVDTAIEENCGLVCFSACGGARMQESLMALMQMAKTSAALERLSNARLPYISVLTDQTFGGVSASLAMLGDINIGEPEARIGFAGRRVIEQTVREKLPDGFQQSEFLLEHGALDMIVQRHDMRERIGGLIAKLTNTSIRLEVK.

A CoA carboxyltransferase N-terminal domain is found at 25 to 289 (VWTKCPSCDQ…TNTSIRLEVK (265 aa)). The Zn(2+) site is built by C29, C32, C48, and C51. The C4-type zinc-finger motif lies at 29–51 (CPSCDQVLYRIALKENLEVCPKC).

It belongs to the AccD/PCCB family. In terms of assembly, acetyl-CoA carboxylase is a heterohexamer composed of biotin carboxyl carrier protein (AccB), biotin carboxylase (AccC) and two subunits each of ACCase subunit alpha (AccA) and ACCase subunit beta (AccD). The cofactor is Zn(2+).

It localises to the cytoplasm. The catalysed reaction is N(6)-carboxybiotinyl-L-lysyl-[protein] + acetyl-CoA = N(6)-biotinyl-L-lysyl-[protein] + malonyl-CoA. Its pathway is lipid metabolism; malonyl-CoA biosynthesis; malonyl-CoA from acetyl-CoA: step 1/1. Component of the acetyl coenzyme A carboxylase (ACC) complex. Biotin carboxylase (BC) catalyzes the carboxylation of biotin on its carrier protein (BCCP) and then the CO(2) group is transferred by the transcarboxylase to acetyl-CoA to form malonyl-CoA. The protein is Acetyl-coenzyme A carboxylase carboxyl transferase subunit beta 2 of Vibrio parahaemolyticus serotype O3:K6 (strain RIMD 2210633).